A 396-amino-acid chain; its full sequence is MADKGLEDVPEGQIESNYDETTDSFDAMNLKAELLRGVYAYGFERPSAIQQRAIMPVIKGHDVIAQAQSGTGKTATFSISTLQKIDSNVKACQALILAPTRELAQQIQKVVVAIGDFMDVACHACIGGTSVRDDMKALQDGPQVVVGTPGRVHDMIQRRVLKTDHMKMFVLDEADEMLSRGFTEQIYDIFQLLPQSTQVVLLSATMPQDVLEVTTKFMRDPVRILVKKDELTLEGIKQFYIAVEKEDWKLDTLSDLYETVTITQAVIFCNTRRKVDWLTDKLTARDFTVSAMHGDMDQAQRDVIMKEFRSGSSRVLIATDLLARGIDVQQVSLVINYDLPANRENYIHRIGRGGRFGRKGVAINFVTADDVRMMREIEQFYSTQIEEMPMNVADLI.

The disordered stretch occupies residues 1–20; it reads MADKGLEDVPEGQIESNYDE. A Q motif motif is present at residues 23 to 51; the sequence is DSFDAMNLKAELLRGVYAYGFERPSAIQQ. One can recognise a Helicase ATP-binding domain in the interval 54–224; it reads IMPVIKGHDV…TKFMRDPVRI (171 aa). Residue 67-74 participates in ATP binding; that stretch reads AQSGTGKT. The short motif at 172-175 is the DEAD box element; that stretch reads DEAD. A Helicase C-terminal domain is found at 235–396; it reads GIKQFYIAVE…EMPMNVADLI (162 aa).

The protein belongs to the DEAD box helicase family. eIF4A subfamily. As to quaternary structure, component of the eIF4F complex, which composition varies with external and internal environmental conditions. It is composed of at least eIF4A, eIF4E and eIF4G.

It localises to the cytoplasm. The catalysed reaction is ATP + H2O = ADP + phosphate + H(+). Functionally, ATP-dependent RNA helicase which is a subunit of the eIF4F complex involved in cap recognition and is required for mRNA binding to ribosome. In the current model of translation initiation, eIF4A unwinds RNA secondary structures in the 5'-UTR of mRNAs which is necessary to allow efficient binding of the small ribosomal subunit, and subsequent scanning for the initiator codon. This Phaeosphaeria nodorum (strain SN15 / ATCC MYA-4574 / FGSC 10173) (Glume blotch fungus) protein is ATP-dependent RNA helicase eIF4A (TIF1).